A 229-amino-acid chain; its full sequence is Ribonuclease T (229 aa).

The region spanning 23–197 is the Exonuclease domain; sequence VIIDVETAGF…YDTERTAKLF (175 aa). Mg(2+)-binding residues include D26, E28, H184, and D189. The Proton donor/acceptor role is filled by H184.

This sequence belongs to the RNase T family. As to quaternary structure, homodimer. Mg(2+) is required as a cofactor.

Functionally, trims short 3' overhangs of a variety of RNA species, leaving a one or two nucleotide 3' overhang. Responsible for the end-turnover of tRNA: specifically removes the terminal AMP residue from uncharged tRNA (tRNA-C-C-A). Also appears to be involved in tRNA biosynthesis. This is Ribonuclease T from Haemophilus influenzae (strain 86-028NP).